Reading from the N-terminus, the 211-residue chain is Dihydrofolate reductase (211 aa).

In terms of domain architecture, DHFR spans 7–210; the sequence is PIVGIVACLQ…YCFEFTLYNR (204 aa). NADP(+) is bound by residues A13 and 20–26; that span reads GIGFRGG. 34 to 39 contacts substrate; sequence EMKYFR. 58-60 contacts NADP(+); sequence RKT. R74 is a substrate binding site. Residues 80–82 and 123–130 contribute to the NADP(+) site; these read SRS and GGGEVYSQ.

Belongs to the dihydrofolate reductase family.

It carries out the reaction (6S)-5,6,7,8-tetrahydrofolate + NADP(+) = 7,8-dihydrofolate + NADPH + H(+). It functions in the pathway cofactor biosynthesis; tetrahydrofolate biosynthesis; 5,6,7,8-tetrahydrofolate from 7,8-dihydrofolate: step 1/1. In terms of biological role, key enzyme in folate metabolism. Catalyzes an essential reaction for de novo glycine and purine synthesis, and for DNA precursor synthesis. The protein is Dihydrofolate reductase (DFR1) of Saccharomyces cerevisiae (strain ATCC 204508 / S288c) (Baker's yeast).